A 109-amino-acid polypeptide reads, in one-letter code: Small ribosomal subunit protein bS6 (109 aa).

This sequence belongs to the bacterial ribosomal protein bS6 family.

Its function is as follows. Binds together with bS18 to 16S ribosomal RNA. This Ehrlichia ruminantium (strain Gardel) protein is Small ribosomal subunit protein bS6.